Here is a 181-residue protein sequence, read N- to C-terminus: Protein GrpE (181 aa).

Over residues 1–10 the composition is skewed to polar residues; it reads MENTQENPAT. Residues 1–33 are disordered; it reads MENTQENPATPSAEDIGSEKQAAQGAAPAAEAA. The segment covering 21–33 has biased composition (low complexity); that stretch reads QAAQGAAPAAEAA.

Belongs to the GrpE family. Homodimer.

Its subcellular location is the cytoplasm. Functionally, participates actively in the response to hyperosmotic and heat shock by preventing the aggregation of stress-denatured proteins, in association with DnaK and GrpE. It is the nucleotide exchange factor for DnaK and may function as a thermosensor. Unfolded proteins bind initially to DnaJ; upon interaction with the DnaJ-bound protein, DnaK hydrolyzes its bound ATP, resulting in the formation of a stable complex. GrpE releases ADP from DnaK; ATP binding to DnaK triggers the release of the substrate protein, thus completing the reaction cycle. Several rounds of ATP-dependent interactions between DnaJ, DnaK and GrpE are required for fully efficient folding. This chain is Protein GrpE, found in Burkholderia cenocepacia (strain ATCC BAA-245 / DSM 16553 / LMG 16656 / NCTC 13227 / J2315 / CF5610) (Burkholderia cepacia (strain J2315)).